The primary structure comprises 649 residues: Lysophospholipase (649 aa).

An N-terminal signal peptide occupies residues 1 to 21 (MNLKEWLLFSDAVFFAQGTLA). 17 N-linked (GlcNAc...) asparagine glycosylation sites follow: N32, N51, N77, N90, N121, N158, N168, N213, N275, N343, N386, N457, N487, N511, N539, N563, and N580. Residues 34-584 (SCDEDINLIR…TNYCWNGTID (551 aa)) enclose the PLA2c domain.

The protein belongs to the lysophospholipase family.

The protein resides in the secreted. The catalysed reaction is a 1-acyl-sn-glycero-3-phosphocholine + H2O = sn-glycerol 3-phosphocholine + a fatty acid + H(+). Catalyzes the release of fatty acids from lysophospholipids. The chain is Lysophospholipase from Torulaspora delbrueckii (Yeast).